Here is a 266-residue protein sequence, read N- to C-terminus: Ras-like protein family member 12 (266 aa).

GTP is bound by residues 27–34, 74–78, and 134–137; these read GRRGAGKS, DTADL, and NKLD.

This sequence belongs to the small GTPase superfamily. Ras family.

The enzyme catalyses GTP + H2O = GDP + phosphate + H(+). The chain is Ras-like protein family member 12 (Rasl12) from Mus musculus (Mouse).